A 132-amino-acid polypeptide reads, in one-letter code: Protein p15 (132 aa).

May play a role in infectivity. The sequence is that of Protein p15 from Panicum mosaic virus (strain United States/Kansas 109S) (PMV).